The sequence spans 427 residues: Enolase (427 aa).

Residue glutamine 164 coordinates (2R)-2-phosphoglycerate. Catalysis depends on glutamate 206, which acts as the Proton donor. Mg(2+)-binding residues include aspartate 243, glutamate 284, and aspartate 311. (2R)-2-phosphoglycerate contacts are provided by lysine 336, arginine 365, serine 366, and lysine 387. Lysine 336 serves as the catalytic Proton acceptor.

This sequence belongs to the enolase family. Mg(2+) is required as a cofactor.

The protein resides in the cytoplasm. It is found in the secreted. The protein localises to the cell surface. The catalysed reaction is (2R)-2-phosphoglycerate = phosphoenolpyruvate + H2O. The protein operates within carbohydrate degradation; glycolysis; pyruvate from D-glyceraldehyde 3-phosphate: step 4/5. Catalyzes the reversible conversion of 2-phosphoglycerate (2-PG) into phosphoenolpyruvate (PEP). It is essential for the degradation of carbohydrates via glycolysis. This Synechococcus sp. (strain JA-2-3B'a(2-13)) (Cyanobacteria bacterium Yellowstone B-Prime) protein is Enolase.